The following is a 155-amino-acid chain: MPEASSPFPDGIVLGFDVGTRRIGVAVGSAWGAGARAVAVIDVHGVAVDWNALDRVKRNWLPVGLVVGDPLTLEGHDQPIRKQAHAFACQLRERYRLPVVLVDERSSSVEAASRFAGARAAGYKRRRDADTLDAIAAAVILERWLADPMQATSLP.

This sequence belongs to the YqgF nuclease family.

The protein localises to the cytoplasm. Its function is as follows. Could be a nuclease involved in processing of the 5'-end of pre-16S rRNA. The chain is Putative pre-16S rRNA nuclease from Xylella fastidiosa (strain M12).